The primary structure comprises 235 residues: Phosphoribosylaminoimidazole-succinocarboxamide synthase (235 aa).

It belongs to the SAICAR synthetase family.

It catalyses the reaction 5-amino-1-(5-phospho-D-ribosyl)imidazole-4-carboxylate + L-aspartate + ATP = (2S)-2-[5-amino-1-(5-phospho-beta-D-ribosyl)imidazole-4-carboxamido]succinate + ADP + phosphate + 2 H(+). It participates in purine metabolism; IMP biosynthesis via de novo pathway; 5-amino-1-(5-phospho-D-ribosyl)imidazole-4-carboxamide from 5-amino-1-(5-phospho-D-ribosyl)imidazole-4-carboxylate: step 1/2. In Streptococcus agalactiae serotype Ia (strain ATCC 27591 / A909 / CDC SS700), this protein is Phosphoribosylaminoimidazole-succinocarboxamide synthase.